Reading from the N-terminus, the 377-residue chain is Presenilin-associated rhomboid-like protein, mitochondrial (377 aa).

Residues 1–52 (MAWRGWAQRGWGCGQAWTLPVCGGSYEELTAALAPSRLLRRRFNFFIQQKCG) constitute a mitochondrion transit peptide. At 53–99 (FRKAPRKVEPRRSDTSSEAYKRSALIPPVEETAFYPSPYPIRTLVKP) the chain is on the mitochondrial matrix side. S65 and S68 each carry phosphoserine. Residues 100–119 (LFFTVGFTGCAFGSAAIWQY) form a helical membrane-spanning segment. At 120–165 (ESLKSKVQSYFDGIKADWLDSIRPQKEGDFRKEINKWWNNLSDGQR) the chain is on the mitochondrial intermembrane side. The chain crosses the membrane as a helical span at residues 166–185 (TVTGIIAANVFVFCLWRVPS). Residues 186–205 (LQRTMIRYFTSNPASKVLCS) are Mitochondrial matrix-facing. The chain crosses the membrane as a helical span at residues 206 to 228 (PMLLSTFSHFSLFHMAANMYVLW). The Mitochondrial intermembrane segment spans residues 229-242 (SFSSSIVNILGQEQ). Residues 243–260 (FMAVYLSAGVISTFVSYV) form a helical membrane-spanning segment. The Mitochondrial matrix segment spans residues 261–270 (CKVATGRYGP). The helical transmembrane segment at 271–287 (SLGASGAIMTVLAAVCT) threads the bilayer. S275 serves as the catalytic Nucleophile. Topologically, residues 288–293 (KIPEGR) are mitochondrial intermembrane. A helical membrane pass occupies residues 294-316 (LAIIFLPMFTFTAGNALKAIIAM). At 317-330 (DTAGMILGWKFFDH) the chain is on the mitochondrial matrix side. A helical transmembrane segment spans residues 331–352 (AAHLGGALFGIWYITYGHELIW). H333 is an active-site residue. At 353-377 (KNREPLVKIWHEMRTNSPKKGGGSK) the chain is on the mitochondrial intermembrane side.

This sequence belongs to the peptidase S54 family. In terms of assembly, interacts with PSEN1 and PSEN2. Binds OPA1. P-beta is proteolytically processed (beta-cleavage) in a PARL-dependent manner.

The protein localises to the mitochondrion inner membrane. It is found in the nucleus. It carries out the reaction Cleaves type-1 transmembrane domains using a catalytic dyad composed of serine and histidine that are contributed by different transmembrane domains.. Functionally, required for the control of apoptosis during postnatal growth. Essential for proteolytic processing of an antiapoptotic form of OPA1 which prevents the release of mitochondrial cytochrome c in response to intrinsic apoptotic signals. Required for the maturation of PINK1 into its 52kDa mature form after its cleavage by mitochondrial-processing peptidase (MPP). Promotes cleavage of serine/threonine-protein phosphatase PGAM5 in damaged mitochondria in response to loss of mitochondrial membrane potential. Mediates differential cleavage of PINK1 and PGAM5 depending on the health status of mitochondria, disassociating from PINK1 and associating with PGAM5 in response to mitochondrial membrane potential loss. Required for processing of CLPB into a form with higher protein disaggregase activity by removing an autoinhibitory N-terminal peptide. Promotes processing of DIABLO/SMAC in the mitochondrion which is required for DIABLO apoptotic activity. Also required for cleavage of STARD7 and TTC19. Promotes changes in mitochondria morphology regulated by phosphorylation of P-beta domain. This Bos taurus (Bovine) protein is Presenilin-associated rhomboid-like protein, mitochondrial (PARL).